The sequence spans 350 residues: 3-dehydroquinate synthase (350 aa).

NAD(+)-binding positions include 63–68, 97–101, 121–122, K134, K143, and 161–164; these read DGEEYK, GVIGD, TT, and FLKT. Zn(2+) is bound by residues E176, H235, and H252.

It belongs to the sugar phosphate cyclases superfamily. Dehydroquinate synthase family. The cofactor is Co(2+). It depends on Zn(2+) as a cofactor. NAD(+) is required as a cofactor.

Its subcellular location is the cytoplasm. The catalysed reaction is 7-phospho-2-dehydro-3-deoxy-D-arabino-heptonate = 3-dehydroquinate + phosphate. The protein operates within metabolic intermediate biosynthesis; chorismate biosynthesis; chorismate from D-erythrose 4-phosphate and phosphoenolpyruvate: step 2/7. Its function is as follows. Catalyzes the conversion of 3-deoxy-D-arabino-heptulosonate 7-phosphate (DAHP) to dehydroquinate (DHQ). This Sulfurovum sp. (strain NBC37-1) protein is 3-dehydroquinate synthase.